A 173-amino-acid chain; its full sequence is MDVTIQHPWFKRTLGPFYPSRLFDQFFGEGLFEYDLLPFLSSTISPYYRQSLFRTVLDSGISEVRSDRDKFVIFLDVKHFSPEDLTVKVQDDFVEIHGKHNERQDDHGYISREFHRRYRLPSNVDQSALSCSLSADGMLTFCGPKIQTGLDATHAERAIPVSREEKPTSAPSS.

M1 is modified (N-acetylmethionine). The interval 1–63 is required for complex formation with BFSP1 and BFSP2; during homooligomerization, mediates the association of 2 dimers to form a tetramer; it reads MDVTIQHPWF…RTVLDSGISE (63 aa). Residue Q6 is modified to Deamidated glutamine; partial. S45 carries the phosphoserine modification. The residue at position 50 (Q50) is a Deamidated glutamine; partial. One can recognise a sHSP domain in the interval 52 to 164; it reads LFRTVLDSGI…AERAIPVSRE (113 aa). N6-acetyllysine is present on K70. Q90 is modified (deamidated glutamine; partial). N6-acetyllysine is present on K99. H100 lines the Zn(2+) pocket. A Deamidated asparagine; partial modification is found at N101. Zn(2+)-binding residues include E102 and H107. Phosphoserine is present on S122. N123 carries the post-translational modification Deamidated asparagine; partial. An intrachain disulfide couples C131 to C142. A Deamidated glutamine; partial modification is found at Q147. H154 contacts Zn(2+). Residue S162 is glycosylated (O-linked (GlcNAc) serine).

The protein belongs to the small heat shock protein (HSP20) family. Heteropolymer composed of three CRYAA and one CRYAB subunits. Inter-subunit bridging via zinc ions enhances stability, which is crucial as there is no protein turn over in the lens. Can also form homodimers and homotetramers (dimers of dimers) which serve as the building blocks of homooligomers. Within homooligomers, the zinc-binding motif is created from residues of 3 different molecules. His-100 and Glu-102 from one molecule are ligands of the zinc ion, and His-107 and His-154 residues from additional molecules complete the site with tetrahedral coordination geometry. Part of a complex required for lens intermediate filament formation composed of BFSP1, BFSP2 and CRYAA. Post-translationally, O-glycosylated; contains N-acetylglucosamine side chains. Deamidation of Asn-101 in lens occurs mostly during the first 30 years of age, followed by a small additional amount of deamidation (approximately 5%) during the next approximately 38 years, resulting in a maximum of approximately 50% deamidation during the lifetime of the individual. In terms of processing, phosphorylation on Ser-122 seems to be developmentally regulated. Absent in the first months of life, it appears during the first 12 years of human lifetime. The relative amount of phosphorylated form versus unphosphorylated form does not change over the lifetime of the individual. Post-translationally, acetylation at Lys-70 may increase chaperone activity. Undergoes age-dependent proteolytical cleavage at the C-terminus. Alpha-crystallin A(1-172) is the most predominant form produced most rapidly during the first 12 years of age and after this age is present in approximately 50% of the lens molecules. In terms of processing, in young individuals and during the first approximately 30 years of life, less than half molecules contain an intramolecular disulfide bond (oxidized form), while in the remaining fraction the cysteines are in the free sulfhydryl form (reduced form). With aging, the amount of oxidized form increases up to 90% and it becomes a major constituent of high molecular weight aggregates, concomitant with an age-dependent loss of its chaperone activity. The reduced form is undetectable in cataractous lenses. In terms of tissue distribution, expressed in the eye lens (at protein level).

Its subcellular location is the cytoplasm. It localises to the nucleus. Its function is as follows. Contributes to the transparency and refractive index of the lens. In its oxidized form (absence of intramolecular disulfide bond), acts as a chaperone, preventing aggregation of various proteins under a wide range of stress conditions. Required for the correct formation of lens intermediate filaments as part of a complex composed of BFSP1, BFSP2 and CRYAA. The sequence is that of Alpha-crystallin A chain (CRYAA) from Homo sapiens (Human).